Here is a 911-residue protein sequence, read N- to C-terminus: Leucine--tRNA ligase (911 aa).

Residues 42-52 (PYPSGKLHMGH) carry the 'HIGH' region motif. Residues 659-663 (TMSKS) carry the 'KMSKS' region motif. Residue Lys-662 coordinates ATP.

The protein belongs to the class-I aminoacyl-tRNA synthetase family.

It localises to the cytoplasm. It carries out the reaction tRNA(Leu) + L-leucine + ATP = L-leucyl-tRNA(Leu) + AMP + diphosphate. The polypeptide is Leucine--tRNA ligase (Delftia acidovorans (strain DSM 14801 / SPH-1)).